The sequence spans 858 residues: Cone cGMP-specific 3',5'-cyclic phosphodiesterase subunit alpha' (858 aa).

GAF domains follow at residues 75–224 (TPEQ…SIIL) and 256–433 (DVER…GWSL). 3',5'-cyclic GMP-binding positions include S97, D116, 169-172 (DKQT), and T176. In terms of domain architecture, PDEase spans 486–819 (EEKQLVAILK…VEWKSLADEY (334 aa)). The active-site Proton donor is the H562. 4 residues coordinate a divalent metal cation: H566, H602, D603, and D723. Residues 830–852 (AKKQEGGAEKAAEDSGGGDDKKS) show a composition bias toward basic and acidic residues. Residues 830 to 858 (AKKQEGGAEKAAEDSGGGDDKKSKTCLML) form a disordered region. C855 carries the cysteine methyl ester modification. A lipid anchor (S-geranylgeranyl cysteine) is attached at C855. The propeptide at 856–858 (LML) is removed in mature form.

This sequence belongs to the cyclic nucleotide phosphodiesterase family. In terms of assembly, composed of two alpha' subunits that are associated with 3 smaller proteins of 11, 13, and 15 kDa. The cofactor is a divalent metal cation.

It localises to the cell membrane. The catalysed reaction is 3',5'-cyclic GMP + H2O = GMP + H(+). In terms of biological role, as cone-specific cGMP phosphodiesterase, it plays an essential role in light detection and cone phototransduction by rapidly decreasing intracellular levels of cGMP. In Homo sapiens (Human), this protein is Cone cGMP-specific 3',5'-cyclic phosphodiesterase subunit alpha' (PDE6C).